A 144-amino-acid polypeptide reads, in one-letter code: Small ribosomal subunit protein eS12z (144 aa).

At serine 2 the chain carries N-acetylserine.

Belongs to the eukaryotic ribosomal protein eS12 family.

This Arabidopsis thaliana (Mouse-ear cress) protein is Small ribosomal subunit protein eS12z (RPS12A).